Consider the following 225-residue polypeptide: Glutathione S-transferase U2 (225 aa).

The GST N-terminal domain maps to 6–85 (ESVKLLGFWI…YIDQTWNNNP (80 aa)). Residues 16 to 17 (SP), 42 to 43 (KK), 56 to 57 (KV), and 69 to 70 (ES) contribute to the glutathione site. The 128-residue stretch at 90–217 (DPYEKAMVRF…EKHIERMKKI (128 aa)) folds into the GST C-terminal domain. A Phosphothreonine modification is found at T151.

The protein belongs to the GST superfamily. Tau family.

It is found in the cytoplasm. The protein resides in the cytosol. The catalysed reaction is RX + glutathione = an S-substituted glutathione + a halide anion + H(+). May be involved in the conjugation of reduced glutathione to a wide number of exogenous and endogenous hydrophobic electrophiles and have a detoxification role against certain herbicides. In Arabidopsis thaliana (Mouse-ear cress), this protein is Glutathione S-transferase U2 (GSTU2).